Here is a 460-residue protein sequence, read N- to C-terminus: Photosystem II CP43 reaction center protein (460 aa).

Residue M1 is a propeptide. A run of 5 helical transmembrane segments spans residues 56–80 (LFET…PHLA), 121–142 (IVGP…RDKN), 165–187 (KALF…RFIT), 242–262 (RPFS…LSYS), and 278–299 (WYNN…ASQA). [CaMn4O5] cluster is bound at residue E354. A helical membrane pass occupies residues 434 to 458 (RARAAAAGFEKGINRENEPVLSMRP).

This sequence belongs to the PsbB/PsbC family. PsbC subfamily. In terms of assembly, PSII is composed of 1 copy each of membrane proteins PsbA, PsbB, PsbC, PsbD, PsbE, PsbF, PsbH, PsbI, PsbJ, PsbK, PsbL, PsbM, PsbT, PsbY, PsbZ, Psb30/Ycf12, at least 3 peripheral proteins of the oxygen-evolving complex and a large number of cofactors. It forms dimeric complexes. Binds multiple chlorophylls and provides some of the ligands for the Ca-4Mn-5O cluster of the oxygen-evolving complex. It may also provide a ligand for a Cl- that is required for oxygen evolution. PSII binds additional chlorophylls, carotenoids and specific lipids. serves as cofactor.

Its subcellular location is the plastid. It localises to the chloroplast thylakoid membrane. One of the components of the core complex of photosystem II (PSII). It binds chlorophyll and helps catalyze the primary light-induced photochemical processes of PSII. PSII is a light-driven water:plastoquinone oxidoreductase, using light energy to abstract electrons from H(2)O, generating O(2) and a proton gradient subsequently used for ATP formation. This chain is Photosystem II CP43 reaction center protein, found in Cyanidium caldarium (Red alga).